The primary structure comprises 234 residues: Sugar fermentation stimulation protein A (234 aa).

Positions 201–220 (LLSEAQQRGVEILAYKAEIS) form a DNA-binding region, H-T-H motif.

Belongs to the SfsA family.

Its function is as follows. Binds to DNA non-specifically. Could be a regulatory factor involved in maltose metabolism. This Shigella flexneri serotype 5b (strain 8401) protein is Sugar fermentation stimulation protein A.